A 321-amino-acid chain; its full sequence is CRISPR system ring nuclease SSO1393 (321 aa).

The protein belongs to the cOA ring nuclease family. As to quaternary structure, homodimer. Requires Does not require a metal cofactor. as cofactor.

The protein resides in the cytoplasm. It carries out the reaction cyclic tetraadenylate = 2 5'-hydroxy-diadenylate 2',3'-cylic phosphate. In terms of biological role, CRISPR (clustered regularly interspaced short palindromic repeat) is an adaptive immune system that provides protection against mobile genetic elements (viruses, transposable elements and conjugative plasmids). CRISPR clusters contain spacers, sequences complementary to antecedent mobile elements, and target invading nucleic acids. CRISPR clusters are transcribed and processed into CRISPR RNA (crRNA). A nuclease that degrades cyclic oligoadenylates (cOA), second messengers that induce an antiviral state important for defense against invading nucleic acids. Destruction of cOA deactivates the Csx1 ribonuclease, preventing uncontrolled degradation of cellular RNA. Slowly degrades cA4 (a tetraadenylate ring) into first a linear tetraadenylate product and secondly into a linear diadenylate product with 5'-OH and 2',3'-cyclic phosphate termini. Is 10-fold less active than SSO2081, suggesting it plays a minor role in cA4 degradation. There may be 2 active sites per homodimer. The chain is CRISPR system ring nuclease SSO1393 from Saccharolobus solfataricus (strain ATCC 35092 / DSM 1617 / JCM 11322 / P2) (Sulfolobus solfataricus).